Consider the following 312-residue polypeptide: Porphobilinogen deaminase (312 aa).

Position 241 is an S-(dipyrrolylmethanemethyl)cysteine (Cys-241).

Belongs to the HMBS family. Monomer. The cofactor is dipyrromethane.

It carries out the reaction 4 porphobilinogen + H2O = hydroxymethylbilane + 4 NH4(+). The protein operates within porphyrin-containing compound metabolism; protoporphyrin-IX biosynthesis; coproporphyrinogen-III from 5-aminolevulinate: step 2/4. Tetrapolymerization of the monopyrrole PBG into the hydroxymethylbilane pre-uroporphyrinogen in several discrete steps. The polypeptide is Porphobilinogen deaminase (Pelotomaculum thermopropionicum (strain DSM 13744 / JCM 10971 / SI)).